A 618-amino-acid polypeptide reads, in one-letter code: UvrABC system protein C (618 aa).

In terms of domain architecture, GIY-YIG spans 13 to 92 (DKPGVYLMKN…IKKYRPKYNI (80 aa)). The region spanning 204–239 (LDIVENFKLNMEKAAENLEFEKAAMLRDKINIIEKI) is the UVR domain.

Belongs to the UvrC family. In terms of assembly, interacts with UvrB in an incision complex.

The protein resides in the cytoplasm. The UvrABC repair system catalyzes the recognition and processing of DNA lesions. UvrC both incises the 5' and 3' sides of the lesion. The N-terminal half is responsible for the 3' incision and the C-terminal half is responsible for the 5' incision. In Clostridium botulinum (strain Loch Maree / Type A3), this protein is UvrABC system protein C.